The primary structure comprises 154 residues: uncharacterized protein (154 aa).

Coiled coils occupy residues 8–48 (DEEV…AIEA) and 89–138 (VQEL…RGLV).

This is an uncharacterized protein from Treponema pallidum (strain Nichols).